The following is a 501-amino-acid chain: Glycerol kinase (501 aa).

ADP is bound at residue T16. ATP-binding residues include T16, T17, and S18. Residue T16 participates in sn-glycerol 3-phosphate binding. R20 is a binding site for ADP. The sn-glycerol 3-phosphate site is built by R84, E85, Y135, and D242. Glycerol is bound by residues R84, E85, Y135, D242, and Q243. ADP contacts are provided by T264 and G307. ATP is bound by residues T264, G307, Q311, and G408. G408 provides a ligand contact to ADP.

The protein belongs to the FGGY kinase family.

The catalysed reaction is glycerol + ATP = sn-glycerol 3-phosphate + ADP + H(+). It functions in the pathway polyol metabolism; glycerol degradation via glycerol kinase pathway; sn-glycerol 3-phosphate from glycerol: step 1/1. Functionally, key enzyme in the regulation of glycerol uptake and metabolism. Catalyzes the phosphorylation of glycerol to yield sn-glycerol 3-phosphate. This chain is Glycerol kinase, found in Saccharolobus islandicus (strain M.14.25 / Kamchatka #1) (Sulfolobus islandicus).